A 196-amino-acid chain; its full sequence is ATP-dependent Clp protease proteolytic subunit (196 aa).

Serine 98 serves as the catalytic Nucleophile. The active site involves histidine 123.

The protein belongs to the peptidase S14 family. In terms of assembly, fourteen ClpP subunits assemble into 2 heptameric rings which stack back to back to give a disk-like structure with a central cavity, resembling the structure of eukaryotic proteasomes.

It is found in the cytoplasm. The enzyme catalyses Hydrolysis of proteins to small peptides in the presence of ATP and magnesium. alpha-casein is the usual test substrate. In the absence of ATP, only oligopeptides shorter than five residues are hydrolyzed (such as succinyl-Leu-Tyr-|-NHMec, and Leu-Tyr-Leu-|-Tyr-Trp, in which cleavage of the -Tyr-|-Leu- and -Tyr-|-Trp bonds also occurs).. In terms of biological role, cleaves peptides in various proteins in a process that requires ATP hydrolysis. Has a chymotrypsin-like activity. Plays a major role in the degradation of misfolded proteins. In Anoxybacillus flavithermus (strain DSM 21510 / WK1), this protein is ATP-dependent Clp protease proteolytic subunit.